The following is a 107-amino-acid chain: UPF0145 protein MAB_3451c (107 aa).

Belongs to the UPF0145 family.

The chain is UPF0145 protein MAB_3451c from Mycobacteroides abscessus (strain ATCC 19977 / DSM 44196 / CCUG 20993 / CIP 104536 / JCM 13569 / NCTC 13031 / TMC 1543 / L948) (Mycobacterium abscessus).